Here is a 335-residue protein sequence, read N- to C-terminus: Glucan endo-1,3-beta-glucosidase, acidic isoform (335 aa).

Residues 1–29 (MARQGVIASMHALALLLGAFAAIPTGVQS) form the signal peptide. Catalysis depends on Glu-122, which acts as the Proton donor. Glu-259 acts as the Nucleophile in catalysis.

The protein belongs to the glycosyl hydrolase 17 family. Accumulates in aleurone layers. Much lower levels are found in the embryo, and none in starchy endosperm.

Its subcellular location is the secreted. It is found in the extracellular space. It carries out the reaction Hydrolysis of (1-&gt;3)-beta-D-glucosidic linkages in (1-&gt;3)-beta-D-glucans.. Functionally, is thought to be an important plant defense-related product against fungal pathogens. This chain is Glucan endo-1,3-beta-glucosidase, acidic isoform, found in Zea mays (Maize).